The chain runs to 154 residues: Deoxyuridine 5'-triphosphate nucleotidohydrolase (154 aa).

Residues 64–66 (RSG), Asn77, 81–83 (TVD), and Lys91 contribute to the substrate site. The interval 135–154 (LADTTRGDGGHGSSGGHASL) is disordered. The span at 144–154 (GHGSSGGHASL) shows a compositional bias: gly residues.

Belongs to the dUTPase family. Homotrimer. The cofactor is Mg(2+).

It catalyses the reaction dUTP + H2O = dUMP + diphosphate + H(+). The protein operates within pyrimidine metabolism; dUMP biosynthesis; dUMP from dCTP (dUTP route): step 2/2. Its function is as follows. This enzyme is involved in nucleotide metabolism: it produces dUMP, the immediate precursor of thymidine nucleotides and it decreases the intracellular concentration of dUTP so that uracil cannot be incorporated into DNA. In Mycolicibacterium vanbaalenii (strain DSM 7251 / JCM 13017 / BCRC 16820 / KCTC 9966 / NRRL B-24157 / PYR-1) (Mycobacterium vanbaalenii), this protein is Deoxyuridine 5'-triphosphate nucleotidohydrolase.